The following is an 821-amino-acid chain: MDLAAAAEPGAGSQHLEVRDEVAEKCQKLFLDFLEEFQSSDGEIKYLQLAEELIRPERNTLVVSFVDLEQFNQQLSTTIQEEFYRVYPYLCRALKTFVKDRKEIPLAKDFYVAFQDLPTRHKIRELTSSRIGLLTRISGQVVRTHPVHPELVSGTFLCLDCQTVIRDVEQQFKYTQPNICRNPVCANRRRFLLDTNKSRFVDFQKVRIQETQAELPRGSIPRSLEVILRAEAVESAQAGDKCDFTGTLIVVPDVSKLSTPGARAETNSRVSGVDGYETEGIRGLRALGVRDLSYRLVFLACCVAPTNPRFGGKELRDEEQTAESIKNQMTVKEWEKVFEMSQDKNLYHNLCTSLFPTIHGNDEVKRGVLLMLFGGVPKTTGEGTSLRGDINVCIVGDPSTAKSQFLKHVEEFSPRAVYTSGKASSAAGLTAAVVRDEESHEFVIEAGALMLADNGVCCIDEFDKMDVRDQVAIHEAMEQQTISITKAGVKATLNARTSILAAANPISGHYDRSKSLKQNINLSAPIMSRFDLFFILVDECNEVTDYAIARRIVDLHSRIEESIDRVYSLDDIRRYLLFARQFKPKISKESEDFIVEQYKHLRQRDGSGVTKSSWRITVRQLESMIRLSEAMARMHCCDEVQPKHVKEAFRLLNKSIIRVETPDVNLDQEEEIQMEVDEGAGGINGHADSPAPVNGINGYNEDINQESAPKASLRLGFSEYCRISNLIVLHLRKVEEEEDESALKRSELVNWYLKEIESEIDSEEELINKKRIIEKVIHRLTHYDHVLIELTQAGLKGSTEGSESYEEDPYLVVNPNYLLED.

Position 1 is an N-acetylmethionine (Met-1). Residues Ser-13, Ser-219, and Ser-271 each carry the phosphoserine modification. Thr-278 carries the post-translational modification Phosphothreonine. The MCM domain maps to 346–553 (LYHNLCTSLF…TDYAIARRIV (208 aa)). The ATP site is built by His-359, Ser-399, Thr-400, Ala-401, Lys-402, Ser-403, and Asn-504. The Arginine finger signature appears at 528-531 (SRFD). ADP is bound by residues Arg-619 and Glu-622. An N6-acetyllysine modification is found at Lys-643. Phosphoserine is present on residues Ser-689 and Ser-762. Thr-791 is modified (phosphothreonine).

Belongs to the MCM family. Component of the MCM2-7 complex. The complex forms a toroidal hexameric ring with the proposed subunit order MCM2-MCM6-MCM4-MCM7-MCM3-MCM5. Component of the CMG helicase complex, a hexameric ring of related MCM2-7 subunits stabilized by CDC45 and the tetrameric GINS complex. May interact with MCM10. Interacts with TIPIN. Interacts with CDT1. Interacts with MCMBP. Interacts with DDI2. O-glycosylated (O-GlcNAcylated), in a cell cycle-dependent manner.

It localises to the nucleus. The protein resides in the chromosome. The catalysed reaction is ATP + H2O = ADP + phosphate + H(+). Its function is as follows. Acts as a component of the MCM2-7 complex (MCM complex) which is the replicative helicase essential for 'once per cell cycle' DNA replication initiation and elongation in eukaryotic cells. Core component of CDC45-MCM-GINS (CMG) helicase, the molecular machine that unwinds template DNA during replication, and around which the replisome is built. The active ATPase sites in the MCM2-7 ring are formed through the interaction surfaces of two neighboring subunits such that a critical structure of a conserved arginine finger motif is provided in trans relative to the ATP-binding site of the Walker A box of the adjacent subunit. The six ATPase active sites, however, are likely to contribute differentially to the complex helicase activity. The chain is DNA replication licensing factor MCM6 from Homo sapiens (Human).